A 498-amino-acid polypeptide reads, in one-letter code: Putative BTB/POZ domain-containing protein L67 (498 aa).

Positions 26–96 (SDINITLSDN…MYGISLSEIN (71 aa)) constitute a BTB domain.

This sequence belongs to the mimivirus BTB/WD family.

This is Putative BTB/POZ domain-containing protein L67 from Acanthamoeba polyphaga (Amoeba).